A 209-amino-acid chain; its full sequence is Large ribosomal subunit protein uL3 (209 aa).

Residues 118 to 150 (GFQGAIKRHGQSRGPMTHGSRYHRRPGSMGPVD) form a disordered region.

The protein belongs to the universal ribosomal protein uL3 family. As to quaternary structure, part of the 50S ribosomal subunit. Forms a cluster with proteins L14 and L19.

Its function is as follows. One of the primary rRNA binding proteins, it binds directly near the 3'-end of the 23S rRNA, where it nucleates assembly of the 50S subunit. This chain is Large ribosomal subunit protein uL3, found in Bacillus pumilus (strain SAFR-032).